The sequence spans 312 residues: Non-structural protein 12A (312 aa).

A compositionally biased stretch (low complexity) spans 1–23 (MFKSGSGSLKRSGSISSVKSFSG). Disordered stretches follow at residues 1–37 (MFKSGSGSLKRSGSISSVKSFSGDSEKGLPPISRGSV), 63–97 (VPEKTKSEGNLKNKSSVITGNFESSGPTNAHYNQN), and 114–162 (KGRG…TGDG). Residues 63-73 (VPEKTKSEGNL) show a composition bias toward basic and acidic residues. A compositionally biased stretch (polar residues) spans 74–97 (KNKSSVITGNFESSGPTNAHYNQN). A compositionally biased stretch (basic and acidic residues) spans 122 to 134 (DARHTATDSRLSQ).

The protein belongs to the phytoreovirus non-structural protein Pns12A family.

It is found in the host cytoplasm. In terms of biological role, constituent of viral factories. In Rice dwarf virus (isolate Fujian) (RDV), this protein is Non-structural protein 12A.